The following is a 269-amino-acid chain: Endo-1,3-1,4-beta-glycanase ExoK (269 aa).

Residues 1–29 (MTIDRYRRFARLAFIATLPLAGLATAAAA) form the signal peptide. The 213-residue stretch at 40–252 (DDFDTLDTRV…RVAFTAAGDE (213 aa)) folds into the GH16 domain. Residue E138 is the Nucleophile of the active site. E142 acts as the Proton donor in catalysis.

The protein belongs to the glycosyl hydrolase 16 family.

The protein resides in the secreted. It participates in glycan metabolism; exopolysaccharide biosynthesis. Functionally, cleaves high molecular weight succinoglycan to yield LMW succinoglycan. Dynamically regulates the molecular weight distribution of succinoglycan by cleaving nascent succinoglycan only during a limited period after its synthesis, perhaps before it undergoes a time-dependent change in its conformation or aggregation state. This chain is Endo-1,3-1,4-beta-glycanase ExoK (exoK), found in Rhizobium meliloti (strain 1021) (Ensifer meliloti).